The following is a 668-amino-acid chain: tRNA 5-methylaminomethyl-2-thiouridine biosynthesis bifunctional protein MnmC (668 aa).

The tract at residues 1–245 (MKHYSIQPAN…KREMLCGVME (245 aa)) is tRNA (mnm(5)s(2)U34)-methyltransferase. The segment at 270 to 668 (IGGGIASALL…LLKGKAVKAG (399 aa)) is FAD-dependent cmnm(5)s(2)U34 oxidoreductase.

This sequence in the N-terminal section; belongs to the methyltransferase superfamily. tRNA (mnm(5)s(2)U34)-methyltransferase family. In the C-terminal section; belongs to the DAO family. It depends on FAD as a cofactor.

It localises to the cytoplasm. It carries out the reaction 5-aminomethyl-2-thiouridine(34) in tRNA + S-adenosyl-L-methionine = 5-methylaminomethyl-2-thiouridine(34) in tRNA + S-adenosyl-L-homocysteine + H(+). Functionally, catalyzes the last two steps in the biosynthesis of 5-methylaminomethyl-2-thiouridine (mnm(5)s(2)U) at the wobble position (U34) in tRNA. Catalyzes the FAD-dependent demodification of cmnm(5)s(2)U34 to nm(5)s(2)U34, followed by the transfer of a methyl group from S-adenosyl-L-methionine to nm(5)s(2)U34, to form mnm(5)s(2)U34. This Escherichia coli O157:H7 protein is tRNA 5-methylaminomethyl-2-thiouridine biosynthesis bifunctional protein MnmC.